The primary structure comprises 727 residues: Elongation factor 2 (727 aa).

One can recognise a tr-type G domain in the interval 19-260 (EQIRNMGICA…MSIKHLPNPL (242 aa)). Residues 28-35 (AHIDHGKT), 94-98 (DTPGH), and 148-151 (NKVD) each bind GTP. The residue at position 603 (His603) is a Diphthamide.

Belongs to the TRAFAC class translation factor GTPase superfamily. Classic translation factor GTPase family. EF-G/EF-2 subfamily.

The protein localises to the cytoplasm. Functionally, catalyzes the GTP-dependent ribosomal translocation step during translation elongation. During this step, the ribosome changes from the pre-translocational (PRE) to the post-translocational (POST) state as the newly formed A-site-bound peptidyl-tRNA and P-site-bound deacylated tRNA move to the P and E sites, respectively. Catalyzes the coordinated movement of the two tRNA molecules, the mRNA and conformational changes in the ribosome. The chain is Elongation factor 2 from Methanococcus maripaludis (strain DSM 14266 / JCM 13030 / NBRC 101832 / S2 / LL).